A 340-amino-acid chain; its full sequence is Guanine nucleotide-binding protein subunit beta-4 (340 aa).

Serine 2 carries the post-translational modification N-acetylserine. A Phosphoserine modification is found at serine 2. WD repeat units follow at residues 53 to 92, 95 to 134, 141 to 179, 182 to 221, and 224 to 263; these read GHLA…KMHA, LRSS…GNVR, GHTG…QTTT, GHSG…CRQS, and GHIS…ELLL. A Phosphohistidine modification is found at histidine 266. WD repeat units lie at residues 268–307 and 310–339; these read NIIC…RAGV and GHDN…LRIW.

Belongs to the WD repeat G protein beta family. In terms of assembly, g proteins are composed of 3 units, alpha, beta and gamma. In terms of tissue distribution, widely expressed in the brain. Highest levels found in the hippocampus and layers v and vi of the neocortex.

Guanine nucleotide-binding proteins (G proteins) are involved as a modulator or transducer in various transmembrane signaling systems. The beta and gamma chains are required for the GTPase activity, for replacement of GDP by GTP, and for G protein-effector interaction. In Rattus norvegicus (Rat), this protein is Guanine nucleotide-binding protein subunit beta-4 (Gnb4).